We begin with the raw amino-acid sequence, 1252 residues long: HEAT repeat-containing protein 6 (1252 aa).

One copy of the HEAT 1 repeat lies at 230-269 (PDLLGKSGLLMKLSDVTHSDPEVRRAAVHCMANLCLSVPG). The tract at residues 365–417 (DGRSPVKPQQPESSAARPSANKKKKYKVKPKKTQQGEKAEEEEPYGEVDAAPG) is disordered. Residues 384 to 396 (ANKKKKYKVKPKK) are compositionally biased toward basic residues. A phosphoserine mark is found at Ser-471 and Ser-474. HEAT repeat units follow at residues 524–562 (ELGSPQSVSLMTLTLKDPSPKTRACALQVLSAILEGSKQ), 586–624 (SSIRELHRCLLLALVAESSSQTLTQIIKCLANLVSNAPY), and 630–667 (SLLTKVWNHIKPYIRHKDVNVRVSSLTLLGAVVSTHAP). Thr-689 is modified (phosphothreonine). Phosphoserine is present on Ser-714.

In Rattus norvegicus (Rat), this protein is HEAT repeat-containing protein 6 (Heatr6).